Reading from the N-terminus, the 328-residue chain is 4-hydroxythreonine-4-phosphate dehydrogenase (328 aa).

Histidine 135 and threonine 136 together coordinate substrate. Residues histidine 165, histidine 210, and histidine 265 each coordinate a divalent metal cation. 3 residues coordinate substrate: lysine 273, asparagine 282, and arginine 291.

The protein belongs to the PdxA family. In terms of assembly, homodimer. It depends on Zn(2+) as a cofactor. Mg(2+) serves as cofactor. Co(2+) is required as a cofactor.

Its subcellular location is the cytoplasm. It carries out the reaction 4-(phosphooxy)-L-threonine + NAD(+) = 3-amino-2-oxopropyl phosphate + CO2 + NADH. It functions in the pathway cofactor biosynthesis; pyridoxine 5'-phosphate biosynthesis; pyridoxine 5'-phosphate from D-erythrose 4-phosphate: step 4/5. Catalyzes the NAD(P)-dependent oxidation of 4-(phosphooxy)-L-threonine (HTP) into 2-amino-3-oxo-4-(phosphooxy)butyric acid which spontaneously decarboxylates to form 3-amino-2-oxopropyl phosphate (AHAP). The protein is 4-hydroxythreonine-4-phosphate dehydrogenase of Enterobacter sp. (strain 638).